The chain runs to 709 residues: Phosphoribosylformylglycinamidine synthase subunit PurL (709 aa).

His36 is an active-site residue. 2 residues coordinate ATP: Tyr39 and Lys80. Glu82 lines the Mg(2+) pocket. Substrate is bound by residues 83 to 86 (SHNH) and Arg105. The active-site Proton acceptor is His84. Position 106 (Asp106) interacts with Mg(2+). Gln226 contacts substrate. Asp252 contributes to the Mg(2+) binding site. 294–296 (ETQ) is a substrate binding site. Asp470 and Gly507 together coordinate ATP. Ser510 is a substrate binding site.

The protein belongs to the FGAMS family. In terms of assembly, monomer. Part of the FGAM synthase complex composed of 1 PurL, 1 PurQ and 2 PurS subunits.

Its subcellular location is the cytoplasm. It catalyses the reaction N(2)-formyl-N(1)-(5-phospho-beta-D-ribosyl)glycinamide + L-glutamine + ATP + H2O = 2-formamido-N(1)-(5-O-phospho-beta-D-ribosyl)acetamidine + L-glutamate + ADP + phosphate + H(+). It participates in purine metabolism; IMP biosynthesis via de novo pathway; 5-amino-1-(5-phospho-D-ribosyl)imidazole from N(2)-formyl-N(1)-(5-phospho-D-ribosyl)glycinamide: step 1/2. Its function is as follows. Part of the phosphoribosylformylglycinamidine synthase complex involved in the purines biosynthetic pathway. Catalyzes the ATP-dependent conversion of formylglycinamide ribonucleotide (FGAR) and glutamine to yield formylglycinamidine ribonucleotide (FGAM) and glutamate. The FGAM synthase complex is composed of three subunits. PurQ produces an ammonia molecule by converting glutamine to glutamate. PurL transfers the ammonia molecule to FGAR to form FGAM in an ATP-dependent manner. PurS interacts with PurQ and PurL and is thought to assist in the transfer of the ammonia molecule from PurQ to PurL. The protein is Phosphoribosylformylglycinamidine synthase subunit PurL of Saccharolobus solfataricus (strain ATCC 35092 / DSM 1617 / JCM 11322 / P2) (Sulfolobus solfataricus).